We begin with the raw amino-acid sequence, 270 residues long: MAAWANGVRAVLLDVSGVLYDSGGAGGGSAIQGSVDAVNRIRHAGLKLRFCTNESQATRSHFAQKLKRFGFSISEEEVTAPGPAATRLMKERGLRPHLLVHNDLLPEFESVEKSDPNCVLIGDAAENFSYKNVNRAFQVLINLQKPVLISLGKGRYYKETDGLKLDVGAYMKALEYACDIKAEVVGKPSPNFFLSALEEMGAKPEEALMIGDDIVHDIGGAKSCGLRAVLVRTGKYRPSDEKHPEVTADGYVNNLAHAVDILLASQDCNQ.

Residues Asp14 and Ser16 each contribute to the Mg(2+) site. Residues 14–16 (DVS), 52–53 (TN), and Lys187 each bind substrate. Asp212 is a binding site for Mg(2+).

The protein belongs to the HAD-like hydrolase superfamily. The cofactor is Mg(2+).

It localises to the cytoplasm. It is found in the nucleus. It catalyses the reaction diphosphate + H2O = 2 phosphate + H(+). Functionally, phosphatase that hydrolyzes imidodiphosphate, 3-phosphohistidine and 6-phospholysine. Has broad substrate specificity and can also hydrolyze inorganic diphosphate, but with lower efficiency. This chain is Phospholysine phosphohistidine inorganic pyrophosphate phosphatase (lhpp), found in Xenopus laevis (African clawed frog).